The sequence spans 123 residues: Large ribosomal subunit protein bL12 (123 aa).

The protein belongs to the bacterial ribosomal protein bL12 family. Homodimer. Part of the ribosomal stalk of the 50S ribosomal subunit. Forms a multimeric L10(L12)X complex, where L10 forms an elongated spine to which 2 to 4 L12 dimers bind in a sequential fashion. Binds GTP-bound translation factors.

In terms of biological role, forms part of the ribosomal stalk which helps the ribosome interact with GTP-bound translation factors. Is thus essential for accurate translation. The polypeptide is Large ribosomal subunit protein bL12 (Rhodopseudomonas palustris (strain HaA2)).